The sequence spans 295 residues: GTPase Era (295 aa).

Residues 3-170 enclose the Era-type G domain; it reads KSGFVTIVGR…VDLMKTELPE (168 aa). A G1 region spans residues 11-18; sequence GRPNVGKS. 11 to 18 is a binding site for GTP; the sequence is GRPNVGKS. Residues 37–41 form a G2 region; sequence QTTRN. The interval 58-61 is G3; the sequence is DTPG. Residues 58 to 62 and 120 to 123 each bind GTP; these read DTPGI and NKID. The G4 stretch occupies residues 120–123; that stretch reads NKID. Positions 149 to 151 are G5; sequence IAA. The KH type-2 domain occupies 201–278; sequence LRDEVPHGIA…NVKIWVKVRK (78 aa).

This sequence belongs to the TRAFAC class TrmE-Era-EngA-EngB-Septin-like GTPase superfamily. Era GTPase family. As to quaternary structure, monomer.

The protein resides in the cytoplasm. Its subcellular location is the cell membrane. In terms of biological role, an essential GTPase that binds both GDP and GTP, with rapid nucleotide exchange. Plays a role in 16S rRNA processing and 30S ribosomal subunit biogenesis and possibly also in cell cycle regulation and energy metabolism. In Clostridium botulinum (strain Eklund 17B / Type B), this protein is GTPase Era.